We begin with the raw amino-acid sequence, 497 residues long: Ethanolamine-phosphate phospho-lyase (497 aa).

At Lys278 the chain carries N6-(pyridoxal phosphate)lysine. The interval 440–497 (TGAETESGISKNTPCRTKMPKEAQSELLRDSSLESRENPSQKRNGLCTDSLLSKRLRT) is disordered. Basic and acidic residues predominate over residues 458-479 (MPKEAQSELLRDSSLESRENPS).

The protein belongs to the class-III pyridoxal-phosphate-dependent aminotransferase family. Homotetramer. Pyridoxal 5'-phosphate is required as a cofactor.

Its subcellular location is the mitochondrion. It carries out the reaction phosphoethanolamine + H2O = acetaldehyde + NH4(+) + phosphate. Functionally, catalyzes the pyridoxal-phosphate-dependent breakdown of phosphoethanolamine, converting it to ammonia, inorganic phosphate and acetaldehyde. The polypeptide is Ethanolamine-phosphate phospho-lyase (ETNPPL) (Bos taurus (Bovine)).